The chain runs to 312 residues: Serine/threonine-protein phosphatase PP1 isozyme 5 (312 aa).

An N-acetylalanine modification is found at A2. Positions 70, 72, 98, and 130 each coordinate Mn(2+). Catalysis depends on H131, which acts as the Proton donor. H179 and H254 together coordinate Mn(2+).

The protein belongs to the PPP phosphatase family. PP-1 subfamily. The cofactor is Mn(2+).

The protein localises to the nucleus. It is found in the cytoplasm. The catalysed reaction is O-phospho-L-seryl-[protein] + H2O = L-seryl-[protein] + phosphate. It catalyses the reaction O-phospho-L-threonyl-[protein] + H2O = L-threonyl-[protein] + phosphate. Phosphatase activity is strongly reduced by the protein phosphatase inhibitor 2 (I-2). Its function is as follows. Serine/threonine-protein phosphatase that possesses phosphatase activity toward para-nitrophenyl phosphate (pNPP) in vitro. In Arabidopsis thaliana (Mouse-ear cress), this protein is Serine/threonine-protein phosphatase PP1 isozyme 5.